A 142-amino-acid polypeptide reads, in one-letter code: Hemoglobin subunit pi (142 aa).

Residues 2-142 (ALTQAEKAAV…ISSVLTEKYR (141 aa)) enclose the Globin domain. Residues histidine 59 and histidine 88 each contribute to the heme b site.

The protein belongs to the globin family.

Functionally, the pi' chain is the counterpart of the alpha chain in the major early embryonic hemoglobin P. This is Hemoglobin subunit pi from Gallus gallus (Chicken).